The chain runs to 400 residues: Na(+)/H(+) antiporter NhaA (400 aa).

Helical transmembrane passes span 9–29 (FLVS…IAMV), 60–80 (LILW…GLEL), 96–116 (VLPA…FYLF), 127–147 (WAIP…ILGA), 155–175 (IFLV…MAIF), 180–200 (LSLI…ALNL), 210–230 (LILG…ATLA), 263–283 (YFVL…GIGL), 294–314 (VILG…FVAI), 327–347 (WISF…SLFI), and 366–386 (VLIA…IASV).

The protein belongs to the NhaA Na(+)/H(+) (TC 2.A.33) antiporter family.

The protein localises to the cell inner membrane. It carries out the reaction Na(+)(in) + 2 H(+)(out) = Na(+)(out) + 2 H(+)(in). Na(+)/H(+) antiporter that extrudes sodium in exchange for external protons. This is Na(+)/H(+) antiporter NhaA from Campylobacter curvus (strain 525.92).